The primary structure comprises 212 residues: MNIMLLGAPGSGKGTLAEKLIKNQGFNQMSTGDLMRKEINDETPLGIECARYMNEGRLVPDEVTMGIVKNFLQDNHNQLIFDGIPRTLNQAKILEENLIELNAKIDKVIYIDVPSEILLNRISGRLICPKCKVSYHIISRKPKLEGICDNDGTELVRRPDDAPEKVKVRLEAYANETAPLVDYYKNKPGFIHIVDNANTTAEEVYAEVLGAL.

Residue 10 to 15 (GSGKGT) participates in ATP binding. Residues 30-59 (STGDLMRKEINDETPLGIECARYMNEGRLV) are NMP. AMP contacts are provided by residues Thr31, Arg36, 57 to 59 (RLV), and Gln90. The segment at 124 to 161 (GRLICPKCKVSYHIISRKPKLEGICDNDGTELVRRPDD) is LID. Arg125 is a binding site for ATP. Positions 128 and 131 each coordinate Zn(2+). 134–135 (SY) is a binding site for ATP. Residues Cys148 and Asp151 each coordinate Zn(2+). AMP contacts are provided by Arg158 and Arg169. An ATP-binding site is contributed by Asn198.

This sequence belongs to the adenylate kinase family. Monomer.

The protein resides in the cytoplasm. It catalyses the reaction AMP + ATP = 2 ADP. It functions in the pathway purine metabolism; AMP biosynthesis via salvage pathway; AMP from ADP: step 1/1. Its function is as follows. Catalyzes the reversible transfer of the terminal phosphate group between ATP and AMP. Plays an important role in cellular energy homeostasis and in adenine nucleotide metabolism. This is Adenylate kinase from Mesoplasma florum (strain ATCC 33453 / NBRC 100688 / NCTC 11704 / L1) (Acholeplasma florum).